A 170-amino-acid chain; its full sequence is Small ribosomal subunit protein mS41 (170 aa).

Residues 1–20 constitute a mitochondrion transit peptide; the sequence is MFRTLLSSTVRSIQLKPVTS.

Belongs to the mitochondrion-specific ribosomal protein mS41 family. In terms of assembly, component of the mitochondrial small ribosomal subunit (mt-SSU).

The protein localises to the mitochondrion. Its function is as follows. Component of the mitochondrial ribosome (mitoribosome), a dedicated translation machinery responsible for the synthesis of mitochondrial genome-encoded proteins, including at least some of the essential transmembrane subunits of the mitochondrial respiratory chain. The mitoribosomes are attached to the mitochondrial inner membrane and translation products are cotranslationally integrated into the membrane. mS41 is involved in telomere length regulation. The chain is Small ribosomal subunit protein mS41 (FYV4) from Candida albicans (strain SC5314 / ATCC MYA-2876) (Yeast).